The sequence spans 119 residues: MSRRTEKVASLLQQELGAILEKEYPRGGPLLTVVEVKITADLGLARAFVSIIGNEEERAETMEFLNDETKNIRRILSSKIRHQFRRIPELEFREDLLYEKASRIEELLRSVRKESGENE.

This sequence belongs to the RbfA family. Monomer. Binds 30S ribosomal subunits, but not 50S ribosomal subunits or 70S ribosomes.

The protein resides in the cytoplasm. Its function is as follows. One of several proteins that assist in the late maturation steps of the functional core of the 30S ribosomal subunit. Associates with free 30S ribosomal subunits (but not with 30S subunits that are part of 70S ribosomes or polysomes). Required for efficient processing of 16S rRNA. May interact with the 5'-terminal helix region of 16S rRNA. The protein is Ribosome-binding factor A of Chlorobium phaeovibrioides (strain DSM 265 / 1930) (Prosthecochloris vibrioformis (strain DSM 265)).